Reading from the N-terminus, the 130-residue chain is Histone H2A type 4 (130 aa).

Position 2 is a phosphoserine; by RPS6KA5 (serine 2). Arginine 4 carries the post-translational modification Citrulline; alternate. Arginine 4 bears the Symmetric dimethylarginine; by PRMT5; alternate mark. Lysine 6 and lysine 10 each carry N6-(2-hydroxyisobutyryl)lysine; alternate. An N6-acetyllysine; alternate mark is found at lysine 6 and lysine 10. N6-lactoyllysine; alternate is present on lysine 10. N6-(2-hydroxyisobutyryl)lysine occurs at positions 75, 76, and 96. Lysine 96 is subject to N6-glutaryllysine; alternate. Glutamine 105 is modified (N5-methylglutamine). Lysine 119 is modified (N6-(2-hydroxyisobutyryl)lysine; alternate). N6-glutaryllysine; alternate occurs at positions 119 and 120. Residue lysine 119 is modified to N6-crotonyllysine; alternate. N6-crotonyllysine is present on lysine 120. Threonine 121 is modified (phosphothreonine; by DCAF1). Lysine 126 is modified (N6-glutaryllysine; alternate). Residue lysine 126 is modified to N6-crotonyllysine; alternate. The short motif at 127–128 (SQ) is the [ST]-Q motif element.

The protein belongs to the histone H2A family. As to quaternary structure, the nucleosome is a histone octamer containing two molecules each of H2A, H2B, H3 and H4 assembled in one H3-H4 heterotetramer and two H2A-H2B heterodimers. The octamer wraps approximately 147 bp of DNA. Deiminated on Arg-4 in granulocytes upon calcium entry. Post-translationally, monoubiquitination of Lys-120 (H2AK119Ub) by RING1, TRIM37 and RNF2/RING2 complex gives a specific tag for epigenetic transcriptional repression and participates in X chromosome inactivation of female mammals. It is involved in the initiation of both imprinted and random X inactivation. Ubiquitinated H2A is enriched in inactive X chromosome chromatin. Ubiquitination of H2A functions downstream of methylation of 'Lys-27' of histone H3 (H3K27me). H2AK119Ub by RNF2/RING2 can also be induced by ultraviolet and may be involved in DNA repair. Following DNA double-strand breaks (DSBs), it is ubiquitinated through 'Lys-63' linkage of ubiquitin moieties by the E2 ligase UBE2N and the E3 ligases RNF8 and RNF168, leading to the recruitment of repair proteins to sites of DNA damage. Ubiquitination at Lys-14 and Lys-16 (H2AK13Ub and H2AK15Ub, respectively) in response to DNA damage is initiated by RNF168 that mediates monoubiquitination at these 2 sites, and 'Lys-63'-linked ubiquitin are then conjugated to monoubiquitin; RNF8 is able to extend 'Lys-63'-linked ubiquitin chains in vitro. H2AK119Ub and ionizing radiation-induced 'Lys-63'-linked ubiquitination (H2AK13Ub and H2AK15Ub) are distinct events. In terms of processing, phosphorylation on Ser-2 (H2AS1ph) is enhanced during mitosis. Phosphorylation on Ser-2 by RPS6KA5/MSK1 directly represses transcription. Acetylation of H3 inhibits Ser-2 phosphorylation by RPS6KA5/MSK1. Phosphorylation at Thr-121 (H2AT120ph) by DCAF1 is present in the regulatory region of many tumor suppresor genes and down-regulates their transcription. Symmetric dimethylation on Arg-4 by the PRDM1/PRMT5 complex may play a crucial role in the germ-cell lineage. Post-translationally, glutamine methylation at Gln-105 (H2AQ104me) by FBL is specifically dedicated to polymerase I. It is present at 35S ribosomal DNA locus and impairs binding of the FACT complex. In terms of processing, crotonylation (Kcr) is specifically present in male germ cells and marks testis-specific genes in post-meiotic cells, including X-linked genes that escape sex chromosome inactivation in haploid cells. Crotonylation marks active promoters and enhancers and confers resistance to transcriptional repressors. It is also associated with post-meiotically activated genes on autosomes. Lactylated in macrophages by EP300/P300 by using lactoyl-CoA directly derived from endogenous or exogenous lactate, leading to stimulates gene transcription. Testis.

The protein resides in the nucleus. It localises to the chromosome. Its function is as follows. Core component of nucleosome. Nucleosomes wrap and compact DNA into chromatin, limiting DNA accessibility to the cellular machineries which require DNA as a template. Histones thereby play a central role in transcription regulation, DNA repair, DNA replication and chromosomal stability. DNA accessibility is regulated via a complex set of post-translational modifications of histones, also called histone code, and nucleosome remodeling. In Rattus norvegicus (Rat), this protein is Histone H2A type 4.